Reading from the N-terminus, the 61-residue chain is Large ribosomal subunit protein uL30 (61 aa).

Belongs to the universal ribosomal protein uL30 family. In terms of assembly, part of the 50S ribosomal subunit.

In Frankia casuarinae (strain DSM 45818 / CECT 9043 / HFP020203 / CcI3), this protein is Large ribosomal subunit protein uL30.